The primary structure comprises 210 residues: Orotate phosphoribosyltransferase (210 aa).

Residues Arg-94, Lys-98, His-100, and 120–128 (EDLISTGGS) each bind 5-phospho-alpha-D-ribose 1-diphosphate. Ser-124 contacts orotate.

The protein belongs to the purine/pyrimidine phosphoribosyltransferase family. PyrE subfamily. Homodimer. It depends on Mg(2+) as a cofactor.

It carries out the reaction orotidine 5'-phosphate + diphosphate = orotate + 5-phospho-alpha-D-ribose 1-diphosphate. It participates in pyrimidine metabolism; UMP biosynthesis via de novo pathway; UMP from orotate: step 1/2. Functionally, catalyzes the transfer of a ribosyl phosphate group from 5-phosphoribose 1-diphosphate to orotate, leading to the formation of orotidine monophosphate (OMP). The polypeptide is Orotate phosphoribosyltransferase (Bacillus mycoides (strain KBAB4) (Bacillus weihenstephanensis)).